A 150-amino-acid chain; its full sequence is Large ribosomal subunit protein bL9 (150 aa).

The protein belongs to the bacterial ribosomal protein bL9 family.

Functionally, binds to the 23S rRNA. The polypeptide is Large ribosomal subunit protein bL9 (Enterococcus faecalis (strain ATCC 700802 / V583)).